The sequence spans 378 residues: N-acetyllactosaminide beta-1,3-N-acetylglucosaminyltransferase 4 (378 aa).

At 1–28 (MLPPQPSAAHQGRGGRSGLLPKGPAMLC) the chain is on the cytoplasmic side. The chain crosses the membrane as a helical; Signal-anchor for type II membrane protein span at residues 29–49 (RLCWLVSYSLAVLLLGCLLFL). Over 50 to 378 (RKAAKPAGDP…KCAAGPIPQR (329 aa)) the chain is Lumenal. The tract at residues 59–81 (PTAHQPFWAPPTPRHSRCPPNHT) is disordered. Residue N192 is glycosylated (N-linked (GlcNAc...) asparagine).

The protein belongs to the glycosyltransferase 31 family. As to expression, mainly expressed in brain tissues such as whole brain, hippocampus, amygdala, cerebellum and caudate nucleus. Also expressed in colon, esophagus and kidney.

The protein resides in the golgi apparatus membrane. It catalyses the reaction a beta-D-galactosyl-(1-&gt;4)-N-acetyl-beta-D-glucosaminyl derivative + UDP-N-acetyl-alpha-D-glucosamine = an N-acetyl-beta-D-glucosaminyl-(1-&gt;3)-beta-D-galactosyl-(1-&gt;4)-N-acetyl-beta-D-glucosaminyl derivative + UDP + H(+). The protein operates within protein modification; protein glycosylation. In terms of biological role, beta-1,3-N-acetylglucosaminyltransferase involved in the synthesis of poly-N-acetyllactosamine. Has activity for type 2 oligosaccharides. This chain is N-acetyllactosaminide beta-1,3-N-acetylglucosaminyltransferase 4 (B3GNT4), found in Homo sapiens (Human).